A 365-amino-acid chain; its full sequence is Deoxyguanosinetriphosphate triphosphohydrolase-like protein (365 aa).

In terms of domain architecture, HD spans 52 to 187; the sequence is RLTHSIEVSQ…VDHADEIAYV (136 aa).

The protein belongs to the dGTPase family. Type 2 subfamily.

This Wolinella succinogenes (strain ATCC 29543 / DSM 1740 / CCUG 13145 / JCM 31913 / LMG 7466 / NCTC 11488 / FDC 602W) (Vibrio succinogenes) protein is Deoxyguanosinetriphosphate triphosphohydrolase-like protein.